We begin with the raw amino-acid sequence, 196 residues long: ATP-dependent Clp protease proteolytic subunit (196 aa).

Catalysis depends on Ser-96, which acts as the Nucleophile. Residue His-121 is part of the active site.

Belongs to the peptidase S14 family. Fourteen ClpP subunits assemble into 2 heptameric rings which stack back to back to give a disk-like structure with a central cavity, resembling the structure of eukaryotic proteasomes.

The protein localises to the cytoplasm. It catalyses the reaction Hydrolysis of proteins to small peptides in the presence of ATP and magnesium. alpha-casein is the usual test substrate. In the absence of ATP, only oligopeptides shorter than five residues are hydrolyzed (such as succinyl-Leu-Tyr-|-NHMec, and Leu-Tyr-Leu-|-Tyr-Trp, in which cleavage of the -Tyr-|-Leu- and -Tyr-|-Trp bonds also occurs).. Functionally, cleaves peptides in various proteins in a process that requires ATP hydrolysis. Has a chymotrypsin-like activity. Plays a major role in the degradation of misfolded proteins. The chain is ATP-dependent Clp protease proteolytic subunit from Streptococcus sanguinis (strain SK36).